The primary structure comprises 41 residues: Large ribosomal subunit protein bL36 (41 aa).

Belongs to the bacterial ribosomal protein bL36 family.

This chain is Large ribosomal subunit protein bL36, found in Nitrobacter winogradskyi (strain ATCC 25391 / DSM 10237 / CIP 104748 / NCIMB 11846 / Nb-255).